Reading from the N-terminus, the 169-residue chain is Protein-export protein SecB (169 aa).

The protein belongs to the SecB family. As to quaternary structure, homotetramer, a dimer of dimers. One homotetramer interacts with 1 SecA dimer.

It is found in the cytoplasm. One of the proteins required for the normal export of preproteins out of the cell cytoplasm. It is a molecular chaperone that binds to a subset of precursor proteins, maintaining them in a translocation-competent state. It also specifically binds to its receptor SecA. This is Protein-export protein SecB from Haemophilus influenzae (strain PittEE).